Consider the following 181-residue polypeptide: Translation initiation factor IF-3, chloroplastic (181 aa).

This sequence belongs to the IF-3 family. Monomer.

The protein localises to the plastid. Its subcellular location is the chloroplast. Its function is as follows. IF-3 binds to the 30S ribosomal subunit and shifts the equilibrium between 70S ribosomes and their 50S and 30S subunits in favor of the free subunits, thus enhancing the availability of 30S subunits on which protein synthesis initiation begins. The polypeptide is Translation initiation factor IF-3, chloroplastic (Galdieria sulphuraria (Red alga)).